The sequence spans 206 residues: Putative 3-methyladenine DNA glycosylase (206 aa).

It belongs to the DNA glycosylase MPG family.

This is Putative 3-methyladenine DNA glycosylase from Staphylococcus carnosus (strain TM300).